Reading from the N-terminus, the 309-residue chain is MILPDVQATKSEVAINLSRVGVTNVKKLVKVARPDKRPIILISTFNMYVDLPSERRGANLSRNFEVIDEVLEDMVKSPVYEIEDLCGEVARRLLNRHEYATRSEVHMDSELIVKRKTPQTEMQSQKVVKVFAKAIAERGEAIKVRRVIGSEVIGITACPCAQEIMRVSAENELQNLGVPQEKIDAFLNKIPMATHNQRGRGIVSIETAGEYEVPLNTLINIIEQSMSTMSFELLKRGDEYEVVRNAHANPKFVEDCVRDMARRVVTEFKDLPDDAVVKIKQINEESIHQHNAFAELSTTMGKLRTEIGQ.

Belongs to the GTP cyclohydrolase IV family. In terms of assembly, homodimer. Requires Fe(2+) as cofactor.

It carries out the reaction GTP + H2O = 7,8-dihydroneopterin 2',3'-cyclic phosphate + formate + diphosphate + H(+). It participates in cofactor biosynthesis; 5,6,7,8-tetrahydromethanopterin biosynthesis. In terms of biological role, converts GTP to 7,8-dihydro-D-neopterin 2',3'-cyclic phosphate, the first intermediate in the biosynthesis of coenzyme methanopterin. In Methanocella arvoryzae (strain DSM 22066 / NBRC 105507 / MRE50), this protein is GTP cyclohydrolase MptA 2.